A 409-amino-acid polypeptide reads, in one-letter code: Glucose-1-phosphate adenylyltransferase (409 aa).

Alpha-D-glucose 1-phosphate contacts are provided by residues Gly-168, Glu-183 to Lys-184, and Ser-201.

Belongs to the bacterial/plant glucose-1-phosphate adenylyltransferase family. In terms of assembly, homotetramer.

The enzyme catalyses alpha-D-glucose 1-phosphate + ATP + H(+) = ADP-alpha-D-glucose + diphosphate. Its pathway is glycan biosynthesis; glycogen biosynthesis. Involved in the biosynthesis of ADP-glucose, a building block required for the elongation reactions to produce glycogen. Catalyzes the reaction between ATP and alpha-D-glucose 1-phosphate (G1P) to produce pyrophosphate and ADP-Glc. This is Glucose-1-phosphate adenylyltransferase from Corynebacterium glutamicum (strain R).